The sequence spans 201 residues: Small ribosomal subunit protein uS4c (201 aa).

Residues 20–44 (GLTSKRPTVGSELRNQSRSTKKSQY) form a disordered region. In terms of domain architecture, S4 RNA-binding spans 89–150 (MRLDNILFRL…NKKSKTLIQN (62 aa)).

It belongs to the universal ribosomal protein uS4 family. As to quaternary structure, part of the 30S ribosomal subunit. Contacts protein S5. The interaction surface between S4 and S5 is involved in control of translational fidelity.

It localises to the plastid. The protein resides in the chloroplast. Functionally, one of the primary rRNA binding proteins, it binds directly to 16S rRNA where it nucleates assembly of the body of the 30S subunit. With S5 and S12 plays an important role in translational accuracy. The chain is Small ribosomal subunit protein uS4c (rps4) from Lotus japonicus (Lotus corniculatus var. japonicus).